A 249-amino-acid polypeptide reads, in one-letter code: Enolase-phosphatase E1 (249 aa).

Residues Asp-9 and Glu-11 each coordinate Mg(2+). Residues 137–138 and Lys-177 contribute to the substrate site; that span reads SS. Asp-204 contributes to the Mg(2+) binding site.

This sequence belongs to the HAD-like hydrolase superfamily. MasA/MtnC family. As to quaternary structure, monomer. It depends on Mg(2+) as a cofactor.

The protein localises to the cytoplasm. The protein resides in the nucleus. The enzyme catalyses 5-methylsulfanyl-2,3-dioxopentyl phosphate + H2O = 1,2-dihydroxy-5-(methylsulfanyl)pent-1-en-3-one + phosphate. The protein operates within amino-acid biosynthesis; L-methionine biosynthesis via salvage pathway; L-methionine from S-methyl-5-thio-alpha-D-ribose 1-phosphate: step 3/6. It participates in amino-acid biosynthesis; L-methionine biosynthesis via salvage pathway; L-methionine from S-methyl-5-thio-alpha-D-ribose 1-phosphate: step 4/6. Functionally, bifunctional enzyme that catalyzes the enolization of 2,3-diketo-5-methylthiopentyl-1-phosphate (DK-MTP-1-P) into the intermediate 2-hydroxy-3-keto-5-methylthiopentenyl-1-phosphate (HK-MTPenyl-1-P), which is then dephosphorylated to form the acireductone 1,2-dihydroxy-3-keto-5-methylthiopentene (DHK-MTPene). The sequence is that of Enolase-phosphatase E1 from Lodderomyces elongisporus (strain ATCC 11503 / CBS 2605 / JCM 1781 / NBRC 1676 / NRRL YB-4239) (Yeast).